Here is a 648-residue protein sequence, read N- to C-terminus: Protein associated with UVRAG as autophagy enhancer (648 aa).

Polar residues-rich tracts occupy residues 131-146 (QESL…TSPS) and 157-173 (PHLT…SSSR). The tract at residues 131–173 (QESLLKNPKTVATSPSPKEGSARSESPHLTASTDDGDARSSSR) is disordered. S144 bears the Phosphoserine mark. Residues 183–222 (ETFMLPADVEKENLHFYAADIIISVIENMKCNLPNQQQPE) form an interaction with UVRAG region. 5 positions are modified to N6-acetyllysine: K469, K509, K519, K559, and K619.

In terms of assembly, interacts with UVRAG; the interaction is direct and promotes association with the PI3K/PI3KC3 and HOPS complexes. Interacts with STX17. Post-translationally, phosphorylated by MTOR at Ser-144 under nutrient-rich conditions. Phosphorylation prevents acetylation by KAT5/TIP60 and impairs RUBCNL/PACER function and autophagosome maturation. Under autophagy induction, Phosphorylation by MTOR is repressed, enabling acetylation by KAT5/TIP60. In terms of processing, acetylated by KAT5/TIP60 under autophagy induction, promoting autophagosome maturation and lipid metabolism. Acetylation is prevented by phosphorylation by MTOR. Lys-469 and Lys-559 constitute the key sites for tuning function in autophagy.

It localises to the cytoplasmic vesicle. Its subcellular location is the autophagosome membrane. Functionally, regulator of autophagy that promotes autophagosome maturation by facilitating the biogenesis of phosphatidylinositol 3-phosphate (PtdIns(3)P) in late steps of autophagy. Acts by antagonizing RUBCN, thereby stimulating phosphatidylinositol 3-kinase activity of the PI3K/PI3KC3 complex. Following anchorage to the autophagosomal SNARE STX17, promotes the recruitment of PI3K/PI3KC3 and HOPS complexes to the autophagosome to regulate the fusion specificity of autophagosomes with late endosomes/lysosomes. Binds phosphoinositides phosphatidylinositol 3-phosphate (PtdIns(3)P), 4-phosphate (PtdIns(4)P) and 5-phosphate (PtdIns(5)P). In addition to its role in autophagy, acts as a regulator of lipid and glycogen homeostasis. May act as a tumor suppressor. This is Protein associated with UVRAG as autophagy enhancer from Mus musculus (Mouse).